Here is a 582-residue protein sequence, read N- to C-terminus: ATP-dependent lipid A-core flippase (582 aa).

5 helical membrane-spanning segments follow: residues 26–46 (LIAASVALILNALVDSSLIYL), 68–88 (ILVMLFILLRGVSNYIASYCL), 140–160 (YVLVTIVREGAYLISLFAVMV), 164–184 (WQLSIVLFLLAPIIAFLISIV), and 252–272 (GLVQLIASLALSAVLYVATFP). The 284-residue stretch at 27 to 310 (IAASVALILN…LTSVNSQFQR (284 aa)) folds into the ABC transmembrane type-1 domain. One can recognise an ABC transporter domain in the interval 342 to 578 (ITFDNVIFSY…GGAYKQLYSM (237 aa)). 376–383 (GRSGSGKS) contributes to the ATP binding site.

This sequence belongs to the ABC transporter superfamily. Lipid exporter (TC 3.A.1.106) family. Homodimer.

Its subcellular location is the cell inner membrane. It catalyses the reaction ATP + H2O + lipid A-core oligosaccharideSide 1 = ADP + phosphate + lipid A-core oligosaccharideSide 2.. In terms of biological role, involved in lipopolysaccharide (LPS) biosynthesis. Translocates lipid A-core from the inner to the outer leaflet of the inner membrane. Transmembrane domains (TMD) form a pore in the inner membrane and the ATP-binding domain (NBD) is responsible for energy generation. The protein is ATP-dependent lipid A-core flippase of Haemophilus ducreyi (strain 35000HP / ATCC 700724).